A 185-amino-acid polypeptide reads, in one-letter code: Orotate phosphoribosyltransferase (185 aa).

Residues Arg102, Lys103, Lys106, His108, and 128 to 136 (DDVITTGGS) each bind 5-phospho-alpha-D-ribose 1-diphosphate. Thr132 and Arg160 together coordinate orotate.

This sequence belongs to the purine/pyrimidine phosphoribosyltransferase family. PyrE subfamily. Homodimer. Requires Mg(2+) as cofactor.

It carries out the reaction orotidine 5'-phosphate + diphosphate = orotate + 5-phospho-alpha-D-ribose 1-diphosphate. The protein operates within pyrimidine metabolism; UMP biosynthesis via de novo pathway; UMP from orotate: step 1/2. Catalyzes the transfer of a ribosyl phosphate group from 5-phosphoribose 1-diphosphate to orotate, leading to the formation of orotidine monophosphate (OMP). The polypeptide is Orotate phosphoribosyltransferase (Leptospira biflexa serovar Patoc (strain Patoc 1 / Ames)).